A 519-amino-acid polypeptide reads, in one-letter code: Acetylcholine receptor subunit beta-like 2 (519 aa).

Residues methionine 1–serine 18 form the signal peptide. Residues threonine 19 to lysine 244 lie on the Extracellular side of the membrane. N-linked (GlcNAc...) asparagine glycosylation occurs at asparagine 50. Cysteine 154 and cysteine 168 form a disulfide bridge. Helical transmembrane passes span threonine 245–leucine 269, valine 277–alanine 295, and tyrosine 311–isoleucine 332. The Cytoplasmic segment spans residues histidine 333–arginine 462. A helical transmembrane segment spans residues phenylalanine 463–cysteine 481.

The protein belongs to the ligand-gated ion channel (TC 1.A.9) family. Acetylcholine receptor (TC 1.A.9.1) subfamily. As to expression, CNS in embryos.

The protein localises to the postsynaptic cell membrane. It is found in the cell membrane. Its function is as follows. After binding acetylcholine, the AChR responds by an extensive change in conformation that affects all subunits and leads to opening of an ion-conducting channel across the plasma membrane. The sequence is that of Acetylcholine receptor subunit beta-like 2 (nAChRbeta2) from Drosophila melanogaster (Fruit fly).